The following is a 513-amino-acid chain: Prostaglandin E2 receptor EP4 subtype (513 aa).

Over 1 to 44 (MAEVGGTIPRSNRELQRCVLLTTTIMSIPGVNASFSSTPERLNS) the chain is Extracellular. N32 is a glycosylation site (N-linked (GlcNAc...) asparagine). Residues 45-68 (PVTIPAVMFIFGVVGNLVAIVVLC) form a helical membrane-spanning segment. Residues 69 to 80 (KSRKEQKETTFY) are Cytoplasmic-facing. Residues 81-104 (TLVCGLAVTDLLGTLLVSPVTIAT) traverse the membrane as a helical segment. Topologically, residues 105–121 (YMKGQWPGDQALCDYST) are extracellular. C117 and C195 are joined by a disulfide. A helical membrane pass occupies residues 122 to 140 (FILLFFGLSGLSIICAMSI). At 141 to 160 (ERYLAINHAYFYSHYVDKRL) the chain is on the cytoplasmic side. Residues 161–185 (AGLTLFAIYASNVLFCALPNMGLGR) traverse the membrane as a helical segment. Residues 186 to 209 (SERQYPGTWCFIDWTTNVTAYAAF) are Extracellular-facing. Residues 210-236 (SYMYAGFSSFLILATVLCNVLVCGALL) traverse the membrane as a helical segment. Topologically, residues 237–295 (RMHRQFMRRTSLGTEQHHAAAAAAVASVACRGHAGASPALQRLSDFRRRRSFRRIAGAE) are cytoplasmic. A helical membrane pass occupies residues 296 to 323 (IQMVILLIATSLVVLICSIPLVVRVFIN). The Extracellular portion of the chain corresponds to 324–340 (QLYQPNVVKDISRNPDL). A helical transmembrane segment spans residues 341–360 (QAIRIASVNPILDPWIYILL). Residues 361-513 (RKTVLSKAIE…ETLKLSEKCI (153 aa)) are Cytoplasmic-facing. The interval 383–403 (GRDSSAQHCSESRRTSSAMSG) is disordered. Over residues 384–403 (RDSSAQHCSESRRTSSAMSG) the composition is skewed to polar residues. 3 positions are modified to phosphoserine: S402, S405, and S407.

Belongs to the G-protein coupled receptor 1 family. In terms of assembly, interacts with FEM1A. In terms of processing, phosphorylation mediates agonist-mediated desensitization by promoting cytoplasmic retention. Abundant expression in ileum, thymus and mastocytoma P-815 cells. Also observed in lung, spleen, heart and uterus.

It is found in the cell membrane. In terms of biological role, receptor for prostaglandin E2 (PGE2). The activity of this receptor is mediated by G(s) proteins that stimulate adenylate cyclase. Has a relaxing effect on smooth muscle. May play an important role in regulating renal hemodynamics, intestinal epithelial transport, adrenal aldosterone secretion, and uterine function. This is Prostaglandin E2 receptor EP4 subtype (Ptger4) from Mus musculus (Mouse).